A 452-amino-acid polypeptide reads, in one-letter code: Gamma-aminobutyric acid receptor subunit delta (452 aa).

The N-terminal stretch at 1–24 (MDAPARLLAPLLLLCAQQLRGTRA) is a signal peptide. Residues 25–251 (MNDIGDYVGS…HLRRNRGVYI (227 aa)) lie on the Extracellular side of the membrane. N-linked (GlcNAc...) asparagine glycosylation is found at Asn-103 and Asn-106. Cys-164 and Cys-178 are oxidised to a cystine. The chain crosses the membrane as a helical span at residues 252–271 (IQSYMPSVLLVAMSWVSFWI). Over 272-275 (SQAA) the chain is Cytoplasmic. The chain crosses the membrane as a helical span at residues 276-298 (VPARVSLGITTVLTMTTLMVSAR). Topologically, residues 299-308 (SSLPRASAIK) are extracellular. The chain crosses the membrane as a helical span at residues 309 to 331 (ALDVYFWICYVFVFAALVEYAFA). The Cytoplasmic portion of the chain corresponds to 332 to 426 (HFNADYRKKQ…ARLRPIDADT (95 aa)). At Ser-390 the chain carries Phosphoserine. A helical membrane pass occupies residues 427-449 (IDIYARAVFPAAFAAVNVIYWAA). Topologically, residues 450-452 (YAM) are extracellular.

The protein belongs to the ligand-gated ion channel (TC 1.A.9) family. Gamma-aminobutyric acid receptor (TC 1.A.9.5) subfamily. GABRD sub-subfamily. As to quaternary structure, heteropentamer, formed by a combination of alpha (GABRA1-6), beta (GABRB1-3), gamma (GABRG1-3), delta (GABRD), epsilon (GABRE), rho (GABRR1-3), pi (GABRP) and theta (GABRQ) chains, each subunit exhibiting distinct physiological and pharmacological properties.

The protein localises to the cell membrane. The enzyme catalyses chloride(in) = chloride(out). Delta subunit of the heteropentameric ligand-gated chloride channel gated by gamma-aminobutyric acid (GABA), a major inhibitory neurotransmitter in the brain. GABA-gated chloride channels, also named GABA(A) receptors (GABAAR), consist of five subunits arranged around a central pore and contain GABA active binding site(s) located at the alpha and beta subunit interface(s). When activated by GABA, GABAARs selectively allow the flow of chloride anions across the cell membrane down their electrochemical gradient. GABAARs containing delta/GABRD subunits are predominantly located in extrasynaptic or perisynaptic positions on hippocampus and cerebellar granule cells, and contribute to the tonic GABAergic inhibition. GABAAR containing alpha-4-beta-3-delta subunits can simultaneously bind GABA and histamine where histamine binds at the interface of two neighboring beta subunits, which may be involved in the regulation of sleep and wakefulness. The chain is Gamma-aminobutyric acid receptor subunit delta from Homo sapiens (Human).